We begin with the raw amino-acid sequence, 203 residues long: Na(+)-translocating NADH-quinone reductase subunit E (203 aa).

The next 6 membrane-spanning stretches (helical) occupy residues 11–31 (SIFI…FLAV), 35–55 (ISTA…TVPL), 82–102 (FLGL…LEMF), 115–135 (GIFL…LFMV), 145–165 (MVYG…MAGV), and 181–201 (LGIT…FSGI).

This sequence belongs to the NqrDE/RnfAE family. Composed of six subunits; NqrA, NqrB, NqrC, NqrD, NqrE and NqrF.

It localises to the cell inner membrane. It catalyses the reaction a ubiquinone + n Na(+)(in) + NADH + H(+) = a ubiquinol + n Na(+)(out) + NAD(+). Functionally, NQR complex catalyzes the reduction of ubiquinone-1 to ubiquinol by two successive reactions, coupled with the transport of Na(+) ions from the cytoplasm to the periplasm. NqrA to NqrE are probably involved in the second step, the conversion of ubisemiquinone to ubiquinol. The polypeptide is Na(+)-translocating NADH-quinone reductase subunit E (Dichelobacter nodosus (strain VCS1703A)).